The primary structure comprises 329 residues: Quinone-oxidoreductase homolog, chloroplastic (329 aa).

It belongs to the zinc-containing alcohol dehydrogenase family. Quinone oxidoreductase subfamily. In terms of processing, the transit peptide is not cleaved.

It localises to the plastid. Its subcellular location is the chloroplast inner membrane. The sequence is that of Quinone-oxidoreductase homolog, chloroplastic (QOR) from Spinacia oleracea (Spinach).